Reading from the N-terminus, the 227-residue chain is tRNA (guanine-N(1)-)-methyltransferase (227 aa).

Residues glycine 112 and 132 to 137 (LGDFVL) each bind S-adenosyl-L-methionine.

This sequence belongs to the RNA methyltransferase TrmD family. Homodimer.

Its subcellular location is the cytoplasm. It carries out the reaction guanosine(37) in tRNA + S-adenosyl-L-methionine = N(1)-methylguanosine(37) in tRNA + S-adenosyl-L-homocysteine + H(+). Its function is as follows. Specifically methylates guanosine-37 in various tRNAs. The protein is tRNA (guanine-N(1)-)-methyltransferase of Gloeobacter violaceus (strain ATCC 29082 / PCC 7421).